Here is a 315-residue protein sequence, read N- to C-terminus: Type II restriction enzyme AvaI (315 aa).

The catalysed reaction is Endonucleolytic cleavage of DNA to give specific double-stranded fragments with terminal 5'-phosphates.. Its function is as follows. A P subtype restriction enzyme that recognizes the double-stranded sequence 5'-CYCGRG-3' and cleaves after C-1. The protein is Type II restriction enzyme AvaI of Anabaena variabilis.